We begin with the raw amino-acid sequence, 189 residues long: Large ribosomal subunit protein bL9 (189 aa).

This sequence belongs to the bacterial ribosomal protein bL9 family.

Functionally, binds to the 23S rRNA. In Cereibacter sphaeroides (strain ATCC 17025 / ATH 2.4.3) (Rhodobacter sphaeroides), this protein is Large ribosomal subunit protein bL9.